Reading from the N-terminus, the 528-residue chain is Protein WHAT'S THIS FACTOR 1 homolog, chloroplastic (528 aa).

The transit peptide at 1-73 directs the protein to the chloroplast; sequence MEPKLLLSAH…KTRVVVEPVR (73 aa). In terms of domain architecture, PORR spans 80–408; that stretch reads KELTFDSVVQ…VKEKMRALVS (329 aa). The interval 410 to 528 is disordered; that stretch reads PRFPRRGGPR…FPDGTPREKW (119 aa). A compositionally biased stretch (basic and acidic residues) spans 418-428; that stretch reads PRKDEEGREVE. Acidic residues predominate over residues 429–491; sequence IDGSDADGEE…DDDDEDEEED (63 aa).

It is found in the plastid. The protein localises to the chloroplast. RNA-binding protein involved in group II intron splicing. Binds specific group II introns and promotes their splicing. Functions in the context of a heterodimer with the ribonuclease III domain-containing protein RNC1. This is Protein WHAT'S THIS FACTOR 1 homolog, chloroplastic from Arabidopsis thaliana (Mouse-ear cress).